The chain runs to 493 residues: MSDLARTDVVLIGAGIMSATLGVLLRRLEPNWSITLIERLDAVAAESSGPWNNAGTGHSALCEMNYTPEMPDGSIDITKAVRVNEQFQVTRQFWAYAAENGILTDVRSFLNPVPHVSFVHGSRGVEYLRRRQKALAGNPLFAGTEFIESPDEFARRLPFMAAKRAFSEPVALNWAADGTDVDFGALAKQLIGYCVQNGTTALFGHEVRNLSRQSDGSWTVTMCNRRTGEKRKLNTKFVFVGAGGDTLPVLQKSGIKEVKGFAGFPIGGRFLRAGNPALTASHRAKVYGFPAPGAPPLGALHLDLRFVNGKSWLVFGPYAGWSPKFLKHGQISDLPRSIRPDNLLSVLGVGLTERRLLNYLISQLRLSEPERVSALREFAPSAIDSDWELTIAGQRVQVIRRDERNGGVLEFGTTVIGDADGSIAGLLGGSPGASTAVAIMLDVLQKCFANRYQSWLPTLKEMVPSLGVQLSNEPALFDEVWSWSTKALKLGAA.

This sequence belongs to the MQO family. The cofactor is FAD.

The catalysed reaction is (S)-malate + a quinone = a quinol + oxaloacetate. Its pathway is carbohydrate metabolism; tricarboxylic acid cycle; oxaloacetate from (S)-malate (quinone route): step 1/1. This chain is Probable malate:quinone oxidoreductase, found in Mycobacterium tuberculosis (strain ATCC 25177 / H37Ra).